A 722-amino-acid chain; its full sequence is Polyribonucleotide nucleotidyltransferase (722 aa).

Mg(2+) contacts are provided by Asp-495 and Asp-501. The KH domain occupies 562–621 (PRLLSFRIDPELIGTVIGPGGRTIKGITERTNTKIDIEDGGIVTIASHDGAAAEEAQRII). Residues 631-699 (GEIFPGSITR…NRGRINLTLR (69 aa)) form the S1 motif domain. Residues 700–722 (GVSQNGGMSNYPEPTPTPVAPLT) form a disordered region. Residues 712-722 (EPTPTPVAPLT) are compositionally biased toward pro residues.

This sequence belongs to the polyribonucleotide nucleotidyltransferase family. The cofactor is Mg(2+).

The protein resides in the cytoplasm. It catalyses the reaction RNA(n+1) + phosphate = RNA(n) + a ribonucleoside 5'-diphosphate. Involved in mRNA degradation. Catalyzes the phosphorolysis of single-stranded polyribonucleotides processively in the 3'- to 5'-direction. The protein is Polyribonucleotide nucleotidyltransferase of Prochlorococcus marinus (strain NATL2A).